Consider the following 158-residue polypeptide: Large ribosomal subunit protein eL24 (158 aa).

Residues 98–146 are compositionally biased toward basic and acidic residues; it reads LDASHKKAEAEKAVRELKQKKANDIEKKRADRKLQGKDVKAAKKAETKK. The segment at 98–158 is disordered; sequence LDASHKKAEA…QPVGAKGGKK (61 aa).

It belongs to the eukaryotic ribosomal protein eL24 family.

The polypeptide is Large ribosomal subunit protein eL24 (RPL24) (Tetrahymena thermophila (strain SB210)).